The following is a 522-amino-acid chain: Neutral amino acid uniporter 4 (522 aa).

10 helical membrane-spanning segments follow: residues Ala-115–Met-135, Leu-181–Leu-201, Ser-226–Ile-246, Leu-255–Ile-275, Tyr-293–Leu-313, Ile-329–Phe-349, Phe-377–Ala-397, Leu-409–Ile-429, Val-435–Val-455, and Pro-467–Gly-487. Asn-515 is a glycosylation site (N-linked (GlcNAc...) asparagine).

Belongs to the amino acid/polyamine transporter 2 family.

Its subcellular location is the lysosome membrane. It catalyses the reaction L-tryptophan(in) = L-tryptophan(out). It carries out the reaction L-alanine(in) = L-alanine(out). The catalysed reaction is L-proline(in) = L-proline(out). Its function is as follows. Uniporter that mediates the transport of neutral amino acids like L-tryptophan, proline and alanine. The transport activity is sodium ions-independent, electroneutral and therefore functions via facilitated diffusion. In Xenopus laevis (African clawed frog), this protein is Neutral amino acid uniporter 4.